Here is a 127-residue protein sequence, read N- to C-terminus: Cliotide T3 (127 aa).

Residues 1–24 (MAYVRLTSLAVLFFLAASVMKTEG) form the signal peptide. Positions 25-53 (GLPTCGETCTLGTCYVPDCSCSWPICMKN) form a cross-link, cyclopeptide (Gly-Asn). Intrachain disulfides connect Cys29–Cys43, Cys33–Cys45, and Cys38–Cys50. Residues 54–127 (HIIAANAKTV…DLKMPLESTN (74 aa)) constitute a propeptide, removed in mature form.

In terms of processing, contains 3 disulfide bonds. This is a cyclic peptide. Expressed in flower, stem, shoot, leaf and seed but not in root, pod and nodule (at protein level).

Functionally, probably participates in a plant defense mechanism. Not active against Gram-negative bacteria E.coli ATCC 700926, K.pneumoniae ATTC 13883 and P.aeruginosa ATCC 39018 at concentration up to 100 uM. Has cytotoxic and hemolytic activity. The sequence is that of Cliotide T3 from Clitoria ternatea (Butterfly pea).